A 343-amino-acid chain; its full sequence is 4-hydroxy-2-oxovalerate aldolase 4 (343 aa).

The 253-residue stretch at 8 to 260 (VTVHDMTLRD…ETGVDVAKIT (253 aa)) folds into the Pyruvate carboxyltransferase domain. 16–17 (RD) serves as a coordination point for substrate. Asp-17 contacts Mn(2+). The active-site Proton acceptor is the His-20. 2 residues coordinate substrate: Ser-170 and His-199. Mn(2+) is bound by residues His-199 and His-201. Tyr-290 contributes to the substrate binding site.

This sequence belongs to the 4-hydroxy-2-oxovalerate aldolase family.

It carries out the reaction (S)-4-hydroxy-2-oxopentanoate = acetaldehyde + pyruvate. This Dechloromonas aromatica (strain RCB) protein is 4-hydroxy-2-oxovalerate aldolase 4.